The chain runs to 84 residues: Cell division topological specificity factor (84 aa).

This sequence belongs to the MinE family.

Functionally, prevents the cell division inhibition by proteins MinC and MinD at internal division sites while permitting inhibition at polar sites. This ensures cell division at the proper site by restricting the formation of a division septum at the midpoint of the long axis of the cell. This chain is Cell division topological specificity factor, found in Pseudomonas aeruginosa (strain LESB58).